Here is a 1392-residue protein sequence, read N- to C-terminus: DNA-directed RNA polymerase subunit beta (1392 aa).

Residues 1372-1392 form a disordered region; that stretch reads LSSYAEEDPDEGPEALPEAAE.

This sequence belongs to the RNA polymerase beta chain family. In terms of assembly, the RNAP catalytic core consists of 2 alpha, 1 beta, 1 beta' and 1 omega subunit. When a sigma factor is associated with the core the holoenzyme is formed, which can initiate transcription.

It catalyses the reaction RNA(n) + a ribonucleoside 5'-triphosphate = RNA(n+1) + diphosphate. Its function is as follows. DNA-dependent RNA polymerase catalyzes the transcription of DNA into RNA using the four ribonucleoside triphosphates as substrates. The chain is DNA-directed RNA polymerase subunit beta from Sphingopyxis alaskensis (strain DSM 13593 / LMG 18877 / RB2256) (Sphingomonas alaskensis).